The chain runs to 599 residues: Kinesin light chain 2 (599 aa).

The stretch at I78–I143 forms a coiled coil. Basic and acidic residues predominate over residues E154–L163. Positions E154 to H188 are disordered. Residues S174 and S178 each carry the phosphoserine modification. TPR repeat units lie at residues L197–T230, A239–T272, A281–V314, A323–R356, and A365–K398. S443 is modified (phosphoserine). The TPR 6 repeat unit spans residues N447–G480. Residues L492–G541 form a disordered region. S505 and S515 each carry phosphoserine. Over residues G532–G541 the composition is skewed to low complexity. Phosphoserine is present on residues S574, S575, and S582.

Belongs to the kinesin light chain family. As to quaternary structure, oligomeric complex composed of two heavy chains and two light chains. Interacts (via TPR repeats) with PLEKHM2.

It is found in the cytoplasm. The protein localises to the cytoskeleton. Its subcellular location is the lysosome membrane. Kinesin is a microtubule-associated force-producing protein that plays a role in organelle transport. The light chain functions in coupling of cargo to the heavy chain or in the modulation of its ATPase activity. Through binding with PLEKHM2 and ARL8B, recruits kinesin-1 to lysosomes and hence direct lysosomes movement toward microtubule plus ends. The protein is Kinesin light chain 2 of Mus musculus (Mouse).